Here is an 86-residue protein sequence, read N- to C-terminus: Large ribosomal subunit protein eL20 (86 aa).

The protein belongs to the eukaryotic ribosomal protein eL20 family. Part of the 50S ribosomal subunit. Binds 23S rRNA.

In Saccharolobus islandicus (strain Y.N.15.51 / Yellowstone #2) (Sulfolobus islandicus), this protein is Large ribosomal subunit protein eL20.